Reading from the N-terminus, the 150-residue chain is Transthyretin (150 aa).

The first 20 residues, 1 to 20 (MAFHSMLLVFLAGLVFLTEA), serve as a signal peptide directing secretion. Cys33 is subject to Sulfocysteine. Residues Lys38, Glu77, and Ser140 each coordinate L-thyroxine.

This sequence belongs to the transthyretin family. Homotetramer. Dimer of dimers. In the homotetramer, subunits assemble around a central channel that can accommodate two ligand molecules. Interacts with RBP4. In terms of processing, sulfonation of the reactive cysteine Cys-33 enhances the stability of the native conformation of TTR, avoiding misassembly of the protein leading to amyloid formation. As to expression, strongly expressed in the brain, and to a lesser extent in the eye.

It is found in the secreted. In terms of biological role, thyroid hormone-binding protein, with a much higher binding affinity for triiodothyronine (T3) than for thyroxine (T4). Probably transports triiodothyronine from the bloodstream to the brain. The protein is Transthyretin (TTR) of Crocodylus porosus (Saltwater crocodile).